The following is a 466-amino-acid chain: Purple acid phosphatase 6 (466 aa).

The N-terminal stretch at 1–20 is a signal peptide; it reads MKNLVIFAFLFLSITTVING. N-linked (GlcNAc...) asparagine glycosylation is present at Asn88. Residue Asp164 participates in Fe cation binding. Asn172 is a glycosylation site (N-linked (GlcNAc...) asparagine). 2 residues coordinate Fe cation: Asp192 and Tyr195. Zn(2+) is bound at residue Asp192. Zn(2+) is bound by residues Asn229 and His314. Substrate is bound at residue Asn229. His324 serves as the catalytic Proton donor. His351 lines the Zn(2+) pocket. 351–353 contributes to the substrate binding site; sequence HVH. Residue His353 coordinates Fe cation. Asn367 and Asn424 each carry an N-linked (GlcNAc...) asparagine glycan.

The protein belongs to the metallophosphoesterase superfamily. Purple acid phosphatase family. In terms of assembly, homodimer. Requires Fe cation as cofactor. Zn(2+) is required as a cofactor. As to expression, specifically expressed in flowers.

The protein localises to the secreted. The catalysed reaction is a phosphate monoester + H2O = an alcohol + phosphate. The protein is Purple acid phosphatase 6 (PAP6) of Arabidopsis thaliana (Mouse-ear cress).